A 129-amino-acid polypeptide reads, in one-letter code: Small ribosomal subunit protein uS11 (129 aa).

Belongs to the universal ribosomal protein uS11 family. Part of the 30S ribosomal subunit. Interacts with proteins S7 and S18. Binds to IF-3.

Its function is as follows. Located on the platform of the 30S subunit, it bridges several disparate RNA helices of the 16S rRNA. Forms part of the Shine-Dalgarno cleft in the 70S ribosome. This chain is Small ribosomal subunit protein uS11, found in Staphylococcus haemolyticus (strain JCSC1435).